Reading from the N-terminus, the 457-residue chain is ATP synthase subunit beta (457 aa).

Position 147–154 (147–154 (GGAGVGKT)) interacts with ATP.

Belongs to the ATPase alpha/beta chains family. As to quaternary structure, F-type ATPases have 2 components, CF(1) - the catalytic core - and CF(0) - the membrane proton channel. CF(1) has five subunits: alpha(3), beta(3), gamma(1), delta(1), epsilon(1). CF(0) has three main subunits: a(1), b(2) and c(9-12). The alpha and beta chains form an alternating ring which encloses part of the gamma chain. CF(1) is attached to CF(0) by a central stalk formed by the gamma and epsilon chains, while a peripheral stalk is formed by the delta and b chains.

Its subcellular location is the cell inner membrane. The enzyme catalyses ATP + H2O + 4 H(+)(in) = ADP + phosphate + 5 H(+)(out). Produces ATP from ADP in the presence of a proton gradient across the membrane. The catalytic sites are hosted primarily by the beta subunits. The sequence is that of ATP synthase subunit beta from Histophilus somni (strain 129Pt) (Haemophilus somnus).